The primary structure comprises 310 residues: Vomeronasal type-1 receptor 40 (310 aa).

Over 1-20 (MNKANMLRTDKDMQIILFSE) the chain is Extracellular. Residues 21-41 (VSVGISANSILFIAHVCMILG) traverse the membrane as a helical segment. The Cytoplasmic portion of the chain corresponds to 42–50 (ENRPKPIDL). Residues 51–71 (YIAFLSLTQLMLLITMGLIAV) traverse the membrane as a helical segment. Over 72–93 (DMFLSQGIWDSTTCQSLIYLHR) the chain is Extracellular. An intrachain disulfide couples C85 to C172. Residues 94-114 (LLRGLSLCATCLLNILWTITL) form a helical membrane-spanning segment. Topologically, residues 115-134 (SSRSFCSTKFKHKSPHHISG) are cytoplasmic. Residues 135 to 155 (AFIFFCVLYMSFSSHLFISII) form a helical membrane-spanning segment. Residues 156–190 (ATHNLTSENFIYVTQSCSLLPLSYSRTSMFSAPMA) lie on the Extracellular side of the membrane. An N-linked (GlcNAc...) asparagine glycan is attached at N159. A helical transmembrane segment spans residues 191 to 211 (IREAFLVSLMALSSGYMVALL). The Cytoplasmic portion of the chain corresponds to 212–238 (WRHKKQAQHLHSTSLSSKASPEQRATR). The chain crosses the membrane as a helical span at residues 239–259 (TILLLMSFFVVLYILENAVFY). The Extracellular portion of the chain corresponds to 260 to 268 (SRIKFKDGS). A helical membrane pass occupies residues 269 to 289 (ILYCVQIILCHSYATVNPFVF). The Cytoplasmic segment spans residues 290–310 (ICTEKHIIKFWESKCGRIVNI).

This sequence belongs to the G-protein coupled receptor 1 family.

The protein resides in the cell membrane. In terms of biological role, putative pheromone receptor implicated in the regulation of social and reproductive behavior. The protein is Vomeronasal type-1 receptor 40 (Vmn1r40) of Mus musculus (Mouse).